A 542-amino-acid chain; its full sequence is Multidrug transporter DTR1 (542 aa).

2 N-linked (GlcNAc...) asparagine glycosylation sites follow: Asn6 and Asn46. Residues 80 to 100 form a helical membrane-spanning segment; it reads LIFLIVIYNGFLGPLAGNVFI. N-linked (GlcNAc...) asparagine glycosylation is found at Asn111 and Asn118. 5 consecutive transmembrane segments (helical) span residues 119–139, 146–166, 169–189, 210–230, and 237–257; these read ATVSVFMATFSISPLFWGALA, ILYIISISLMVIINILLASVP, IGSLIFLRIIQAFASSSVISL, FMLGPNLGPILAPIIAGLILL, and WLFGFLCIVSGLGLIMVILLL. Asn274 carries N-linked (GlcNAc...) asparagine glycosylation. A run of 4 helical transmembrane segments spans residues 332–352, 374–394, 419–439, and 441–461; these read IMTFPPVILTSIANALLFCTY, IGACYVCPGVCMLLGSQIGGH, ILTVCGVLLAIGGSIGYGWCI, and FHYHISAVLVFAGLMAFGLTW. Residue Asn463 is glycosylated (N-linked (GlcNAc...) asparagine). The next 2 helical transmembrane spans lie at 481–501 and 511–531; these read AIAVSSFFRNIAAAISSALIA and FCFLGLGLINLVSLFSILVLI.

Belongs to the major facilitator superfamily. CAR1 family.

It is found in the cell membrane. Its function is as follows. Plasma membrane acetic acid exporter, relieving the stress induced upon cells within hemocytes, and thus enabling increased proliferation and virulence against Galleria mellonella larvae. Confers resistance to weak acid and oxidative stress, but not to antifungal drugs. This chain is Multidrug transporter DTR1, found in Candida glabrata (strain ATCC 2001 / BCRC 20586 / JCM 3761 / NBRC 0622 / NRRL Y-65 / CBS 138) (Yeast).